We begin with the raw amino-acid sequence, 429 residues long: MKKQNNLRSLAAQAVEQVVEQGQSLSNVLPPLQQKVADKDKALLQELCFGVLRTLSQLEWLINKLMSRPMTGKQRTVHYLIMVGFYQLLYTRVPPHAALAETVEGAVSIKRPQLKGLINGVLRQFQRQQETLLNEFATSDARFLHPGWLVKRLQNAYPTQWQRIIEANNQRPPMWLRVNRTHHTRDGWLGLLEDAGMKGYPHPDYPDAVRLETPAPVHALPGFAEGWVTVQDASAQGCAVFLAPQNGEHILDLCAAPGGKTTHILEVAPEADVVAVDIDEQRLSRVYDNLKRLGMKATVKQGDGRYPAQWCGEQQFDRILLDAPCSATGVIRRHPDIKWLRRDRDIAELAQLQAEILDAVWPRLKPGGTLVYATCSVLPEENRDQIKTFLQRTPDAALSETGTPDQPGQQNLPGGEEGDGFFYAKLIKK.

Residues Cys254 to Lys260, Asp277, Asp303, and Asp322 each bind S-adenosyl-L-methionine. The Nucleophile role is filled by Cys375. Residues Ala397–Asp419 are disordered. A compositionally biased stretch (polar residues) spans Glu400–Leu412.

It belongs to the class I-like SAM-binding methyltransferase superfamily. RsmB/NOP family.

The protein localises to the cytoplasm. It carries out the reaction cytidine(967) in 16S rRNA + S-adenosyl-L-methionine = 5-methylcytidine(967) in 16S rRNA + S-adenosyl-L-homocysteine + H(+). Specifically methylates the cytosine at position 967 (m5C967) of 16S rRNA. The protein is Ribosomal RNA small subunit methyltransferase B of Salmonella paratyphi B (strain ATCC BAA-1250 / SPB7).